Consider the following 269-residue polypeptide: MASFNNVLTKAAAGRLCKAMGVRMVANPLVVQLAANAGFEALFIDLEHSTLSLADASAIACAGLLSGLTPLVRVPYQCGIGFVQQALDGGAMGIVFPHIHTAADARAAVQTCKFPPLGVRSMWGQQPALGMRVTAIGRIVEVCNAAASSVIVMIEAASSIENIEAIAAVEGVDVLLVGCLDLSTDMGMPGRFETRAFRTALEKVSAACRHSGKTMGLAGIYNNRELHEWAINTLNVRFMLCQQDSNLLAMAAVDCASAVAKIDRARLLN.

The Proton acceptor role is filled by H48. A divalent metal cation-binding residues include E155 and D181. D181 serves as a coordination point for substrate.

This sequence belongs to the HpcH/HpaI aldolase family. As to quaternary structure, homohexamer; trimer of dimers. It depends on Co(2+) as a cofactor. The cofactor is Mn(2+). Requires Zn(2+) as cofactor. Fe(2+) serves as cofactor. Mg(2+) is required as a cofactor.

The catalysed reaction is 4-hydroxy-4-methyl-2-oxoglutarate = 2 pyruvate. The protein operates within secondary metabolite biosynthesis. Its function is as follows. 4-hydroxy-4-methyl-2-oxoglutarate aldolase; part of the gene cluster that mediates the biosynthesis of the tetramic acid Sch210972, a potential anti-HIV fungal natural product that contains a decalin core. The PKS module of cghG together with the enoylreductase cghC catalyze the formation of the polyketide unit which is then conjugated to 4-hydroxyl-4-methyl glutamate (HMG) by the condensation domain of the cghG NRPS module. One unique structural feature of Sch210972 is the tetramic acid motif proposed to be derived from the non-proteinogenic amino acid HMG, by a Dieckmann-type condensation catalyzed by the reductase domain of cghG. The aldolase cghB catalyzes the aldol condensation of 2 molecules of pyruvic acid to yield the intermediate 4-hydroxyl-4-methyl-2-oxoglutarate (HMOG), which can then be stereoselectively transaminated by an unidentified enzyme to form HMG. The Diels-Alderase cghA then uses the Dieckmann product released by cghG as substrate and catalyzes the Diels-Alder cycloaddition to form the decalin ring of Sch210972. CghA also suppresses the nonenzymatic formation of the alternative stereoisomer. The protein is 4-hydroxy-4-methyl-2-oxoglutarate aldolase cghB of Chaetomium globosum (strain ATCC 6205 / CBS 148.51 / DSM 1962 / NBRC 6347 / NRRL 1970) (Soil fungus).